The primary structure comprises 155 residues: SsrA-binding protein (155 aa).

Belongs to the SmpB family.

Its subcellular location is the cytoplasm. In terms of biological role, required for rescue of stalled ribosomes mediated by trans-translation. Binds to transfer-messenger RNA (tmRNA), required for stable association of tmRNA with ribosomes. tmRNA and SmpB together mimic tRNA shape, replacing the anticodon stem-loop with SmpB. tmRNA is encoded by the ssrA gene; the 2 termini fold to resemble tRNA(Ala) and it encodes a 'tag peptide', a short internal open reading frame. During trans-translation Ala-aminoacylated tmRNA acts like a tRNA, entering the A-site of stalled ribosomes, displacing the stalled mRNA. The ribosome then switches to translate the ORF on the tmRNA; the nascent peptide is terminated with the 'tag peptide' encoded by the tmRNA and targeted for degradation. The ribosome is freed to recommence translation, which seems to be the essential function of trans-translation. This is SsrA-binding protein from Alkaliphilus oremlandii (strain OhILAs) (Clostridium oremlandii (strain OhILAs)).